A 367-amino-acid polypeptide reads, in one-letter code: UDP-N-acetylglucosamine--N-acetylmuramyl-(pentapeptide) pyrophosphoryl-undecaprenol N-acetylglucosamine transferase (367 aa).

Residues 15 to 17 (TGG), Asn-127, Arg-163, Ser-191, Ile-249, and Gln-294 contribute to the UDP-N-acetyl-alpha-D-glucosamine site.

Belongs to the glycosyltransferase 28 family. MurG subfamily.

It localises to the cell inner membrane. The catalysed reaction is di-trans,octa-cis-undecaprenyl diphospho-N-acetyl-alpha-D-muramoyl-L-alanyl-D-glutamyl-meso-2,6-diaminopimeloyl-D-alanyl-D-alanine + UDP-N-acetyl-alpha-D-glucosamine = di-trans,octa-cis-undecaprenyl diphospho-[N-acetyl-alpha-D-glucosaminyl-(1-&gt;4)]-N-acetyl-alpha-D-muramoyl-L-alanyl-D-glutamyl-meso-2,6-diaminopimeloyl-D-alanyl-D-alanine + UDP + H(+). The protein operates within cell wall biogenesis; peptidoglycan biosynthesis. Functionally, cell wall formation. Catalyzes the transfer of a GlcNAc subunit on undecaprenyl-pyrophosphoryl-MurNAc-pentapeptide (lipid intermediate I) to form undecaprenyl-pyrophosphoryl-MurNAc-(pentapeptide)GlcNAc (lipid intermediate II). The protein is UDP-N-acetylglucosamine--N-acetylmuramyl-(pentapeptide) pyrophosphoryl-undecaprenol N-acetylglucosamine transferase of Burkholderia pseudomallei (strain 1106a).